The primary structure comprises 218 residues: Capsid protein (218 aa).

Position 1 is an N-acetylmethionine; by host (M1). The segment at 1–30 (MDKSGSPNASRTSRRRRPRRGSRSASGADA) is disordered. Over residues 12-22 (TSRRRRPRRGS) the composition is skewed to basic residues.

Belongs to the cucumovirus capsid protein family.

It localises to the virion. Capsid protein. Probably binds RNA and plays a role in packaging. This chain is Capsid protein, found in Cucumis sativus (Cucumber).